Here is a 229-residue protein sequence, read N- to C-terminus: Cytochrome c oxidase subunit 2 (229 aa).

Over 1–26 (MSTWANLGLQDSASPLMEQLIFFHDH) the chain is Mitochondrial intermembrane. Residues 27–48 (ALLILVMITVLVGYLMVMLFFN) traverse the membrane as a helical segment. The Mitochondrial matrix segment spans residues 49-62 (SYVNRFLLHGQLIE). The helical transmembrane segment at 63 to 82 (MIWTILPAIILLFIAMPSLR) threads the bilayer. The Mitochondrial intermembrane portion of the chain corresponds to 83-229 (LLYLLDEINE…IKWISDKVNS (147 aa)). Cu cation is bound by residues His161, Cys196, Glu198, Cys200, His204, and Met207. Glu198 contacts Mg(2+).

This sequence belongs to the cytochrome c oxidase subunit 2 family. Component of the cytochrome c oxidase (complex IV, CIV), a multisubunit enzyme composed of a catalytic core of 3 subunits and several supernumerary subunits. The complex exists as a monomer or a dimer and forms supercomplexes (SCs) in the inner mitochondrial membrane with ubiquinol-cytochrome c oxidoreductase (cytochrome b-c1 complex, complex III, CIII). Cu cation is required as a cofactor.

It localises to the mitochondrion inner membrane. It carries out the reaction 4 Fe(II)-[cytochrome c] + O2 + 8 H(+)(in) = 4 Fe(III)-[cytochrome c] + 2 H2O + 4 H(+)(out). In terms of biological role, component of the cytochrome c oxidase, the last enzyme in the mitochondrial electron transport chain which drives oxidative phosphorylation. The respiratory chain contains 3 multisubunit complexes succinate dehydrogenase (complex II, CII), ubiquinol-cytochrome c oxidoreductase (cytochrome b-c1 complex, complex III, CIII) and cytochrome c oxidase (complex IV, CIV), that cooperate to transfer electrons derived from NADH and succinate to molecular oxygen, creating an electrochemical gradient over the inner membrane that drives transmembrane transport and the ATP synthase. Cytochrome c oxidase is the component of the respiratory chain that catalyzes the reduction of oxygen to water. Electrons originating from reduced cytochrome c in the intermembrane space (IMS) are transferred via the dinuclear copper A center (CU(A)) of subunit 2 and heme A of subunit 1 to the active site in subunit 1, a binuclear center (BNC) formed by heme A3 and copper B (CU(B)). The BNC reduces molecular oxygen to 2 water molecules using 4 electrons from cytochrome c in the IMS and 4 protons from the mitochondrial matrix. The polypeptide is Cytochrome c oxidase subunit 2 (mt:CoII) (Drosophila subobscura (Fruit fly)).